Reading from the N-terminus, the 60-residue chain is UPF0434 protein ECA2555 (60 aa).

The protein belongs to the UPF0434 family.

The chain is UPF0434 protein ECA2555 from Pectobacterium atrosepticum (strain SCRI 1043 / ATCC BAA-672) (Erwinia carotovora subsp. atroseptica).